The following is a 317-amino-acid chain: tRNA dimethylallyltransferase (317 aa).

13–20 (GPTASGKS) lines the ATP pocket. Position 15-20 (15-20 (TASGKS)) interacts with substrate.

The protein belongs to the IPP transferase family. In terms of assembly, monomer. It depends on Mg(2+) as a cofactor.

The enzyme catalyses adenosine(37) in tRNA + dimethylallyl diphosphate = N(6)-dimethylallyladenosine(37) in tRNA + diphosphate. Its function is as follows. Catalyzes the transfer of a dimethylallyl group onto the adenine at position 37 in tRNAs that read codons beginning with uridine, leading to the formation of N6-(dimethylallyl)adenosine (i(6)A). In Kineococcus radiotolerans (strain ATCC BAA-149 / DSM 14245 / SRS30216), this protein is tRNA dimethylallyltransferase.